The primary structure comprises 257 residues: Snake venom serine protease KN1 (257 aa).

The N-terminal stretch at 1–18 (MVLIRVLANLLILQLSYA) is a signal peptide. A propeptide spanning residues 19-24 (QKSSEL) is cleaved from the precursor. The Peptidase S1 domain occupies 25 to 248 (VVGGHPCNIN…HLDWIKSIIA (224 aa)). Intrachain disulfides connect Cys-31–Cys-162, Cys-49–Cys-65, Cys-141–Cys-209, Cys-173–Cys-188, and Cys-199–Cys-224. Residue His-64 is the Charge relay system of the active site. The N-linked (GlcNAc...) asparagine glycan is linked to Asn-102. Asp-109 functions as the Charge relay system in the catalytic mechanism. Asn-120 and Asn-121 each carry an N-linked (GlcNAc...) asparagine glycan. Residue Ser-203 is the Charge relay system of the active site.

The protein belongs to the peptidase S1 family. Snake venom subfamily. As to quaternary structure, monomer. Expressed by the venom gland.

Its subcellular location is the secreted. Snake venom serine protease that may act in the hemostasis system of the prey. The protein is Snake venom serine protease KN1 of Trimeresurus stejnegeri (Chinese green tree viper).